A 739-amino-acid polypeptide reads, in one-letter code: Phosphoribosylformylglycinamidine synthase subunit PurL (739 aa).

Residue His54 is part of the active site. ATP is bound by residues Tyr57 and Lys96. Position 98 (Glu98) interacts with Mg(2+). Substrate is bound by residues 99 to 102 and Arg121; that span reads SHNH. Residue His100 is the Proton acceptor of the active site. Residue Asp122 coordinates Mg(2+). Gln245 is a substrate binding site. A Mg(2+)-binding site is contributed by Asp273. A substrate-binding site is contributed by 317-319; the sequence is ESQ. ATP-binding residues include Asp500 and Gly537. Asn538 is a Mg(2+) binding site. Residue Ser540 participates in substrate binding.

It belongs to the FGAMS family. Monomer. Part of the FGAM synthase complex composed of 1 PurL, 1 PurQ and 2 PurS subunits.

It is found in the cytoplasm. The catalysed reaction is N(2)-formyl-N(1)-(5-phospho-beta-D-ribosyl)glycinamide + L-glutamine + ATP + H2O = 2-formamido-N(1)-(5-O-phospho-beta-D-ribosyl)acetamidine + L-glutamate + ADP + phosphate + H(+). It participates in purine metabolism; IMP biosynthesis via de novo pathway; 5-amino-1-(5-phospho-D-ribosyl)imidazole from N(2)-formyl-N(1)-(5-phospho-D-ribosyl)glycinamide: step 1/2. In terms of biological role, part of the phosphoribosylformylglycinamidine synthase complex involved in the purines biosynthetic pathway. Catalyzes the ATP-dependent conversion of formylglycinamide ribonucleotide (FGAR) and glutamine to yield formylglycinamidine ribonucleotide (FGAM) and glutamate. The FGAM synthase complex is composed of three subunits. PurQ produces an ammonia molecule by converting glutamine to glutamate. PurL transfers the ammonia molecule to FGAR to form FGAM in an ATP-dependent manner. PurS interacts with PurQ and PurL and is thought to assist in the transfer of the ammonia molecule from PurQ to PurL. The sequence is that of Phosphoribosylformylglycinamidine synthase subunit PurL from Bacillus cereus (strain G9842).